The sequence spans 206 residues: Threonine efflux protein (206 aa).

A helical membrane pass occupies residues 1-21 (MLMLFLTVAMVHIVALMSPGP). Over 22–43 (DFFFVSQTAVSRSRKEAMMGVL) the chain is Periplasmic. A helical membrane pass occupies residues 44-64 (GITCGVMVWAGIALLGLHLII). At 65–66 (EK) the chain is on the cytoplasmic side. Residues 67–87 (MAWLHTLIMVGGGLYLCWMGY) traverse the membrane as a helical segment. Residues 88–149 (QMLRGALKKE…VGDNVGTTAR (62 aa)) lie on the Periplasmic side of the membrane. A helical transmembrane segment spans residues 150 to 173 (WGIFALIIVETLAWFTVVASLFAL). Topologically, residues 174–206 (PQMRRGYQRLAKWIDGFAGALFAGFGIHLIISR) are cytoplasmic.

This sequence belongs to the Rht family.

The protein localises to the cell inner membrane. Functionally, conducts the efflux of threonine. This is Threonine efflux protein (rhtC) from Escherichia coli O157:H7.